A 174-amino-acid polypeptide reads, in one-letter code: NADH-quinone oxidoreductase subunit C (174 aa).

Belongs to the complex I 30 kDa subunit family. In terms of assembly, NDH-1 is composed of 14 different subunits. Subunits NuoB, C, D, E, F, and G constitute the peripheral sector of the complex.

The protein resides in the cell membrane. The catalysed reaction is a quinone + NADH + 5 H(+)(in) = a quinol + NAD(+) + 4 H(+)(out). Its function is as follows. NDH-1 shuttles electrons from NADH, via FMN and iron-sulfur (Fe-S) centers, to quinones in the respiratory chain. The immediate electron acceptor for the enzyme in this species is believed to be ubiquinone. Couples the redox reaction to proton translocation (for every two electrons transferred, four hydrogen ions are translocated across the cytoplasmic membrane), and thus conserves the redox energy in a proton gradient. This chain is NADH-quinone oxidoreductase subunit C, found in Roseiflexus sp. (strain RS-1).